Reading from the N-terminus, the 1071-residue chain is Tricorn protease (1071 aa).

The tract at residues 39–310 is six-bladed beta propeller; sequence MPNLLLNPDI…EKIEKIEIGD (272 aa). The interval 131-132 is binds the substrate's C-terminus; sequence RR. The interval 326 to 675 is seven-bladed beta propeller; that stretch reads AEDFSPLDGD…EDERTVETDK (350 aa). The segment at 679-745 is C-1; helical bundle; the sequence is VSSIHEEFLQ…VEMQGEYRTS (67 aa). His746 functions as the Charge relay system in the catalytic mechanism. The segment at 761 to 855 is PDZ-like; it reads RSGRIACDFK…DLMIDILDDD (95 aa). The segment at 856–1061 is C-2; alpha-beta sandwich; the sequence is RFIRYRSWVE…IDALIEELRN (206 aa). Position 916-918 (916-918) interacts with substrate; it reads GGG. Ser965 acts as the Nucleophile in catalysis. A substrate-binding site is contributed by 993-995; that stretch reads GIT. Glu1023 serves as the catalytic Charge relay system.

Belongs to the peptidase S41B family. In terms of assembly, part of the Tricorn proteolytic complex. Assembles to form a hexameric toroid, 20 copies of which may then assemble to form an icosahedral supermolecule of 14.6 MDa.

It is found in the cytoplasm. Functionally, tricorn degrades oligopeptides (probably derived from the proteasome) and channels the products to F1, F2 and F3 proteases, which then catalyze the terminal degradation step, yielding free amino acids. The chain is Tricorn protease (tri) from Thermoplasma acidophilum (strain ATCC 25905 / DSM 1728 / JCM 9062 / NBRC 15155 / AMRC-C165).